A 379-amino-acid polypeptide reads, in one-letter code: Hydrogenase expression/formation protein HupD (379 aa).

Residues Cys-36, Cys-64, and Cys-67 each contribute to the Fe cation site.

Belongs to the HypD family.

This Azotobacter chroococcum mcd 1 protein is Hydrogenase expression/formation protein HupD (hupD).